The following is a 278-amino-acid chain: Diaminopimelate epimerase (278 aa).

Residues N13, Q46, and N65 each contribute to the substrate site. C74 acts as the Proton donor in catalysis. Residues 75-76, N157, N190, and 208-209 contribute to the substrate site; these read GN and ER. Residue C217 is the Proton acceptor of the active site. 218–219 provides a ligand contact to substrate; sequence GT.

The protein belongs to the diaminopimelate epimerase family. In terms of assembly, homodimer.

Its subcellular location is the cytoplasm. The enzyme catalyses (2S,6S)-2,6-diaminopimelate = meso-2,6-diaminopimelate. Its pathway is amino-acid biosynthesis; L-lysine biosynthesis via DAP pathway; DL-2,6-diaminopimelate from LL-2,6-diaminopimelate: step 1/1. Catalyzes the stereoinversion of LL-2,6-diaminopimelate (L,L-DAP) to meso-diaminopimelate (meso-DAP), a precursor of L-lysine and an essential component of the bacterial peptidoglycan. The chain is Diaminopimelate epimerase from Magnetococcus marinus (strain ATCC BAA-1437 / JCM 17883 / MC-1).